The chain runs to 317 residues: mRNA 3'-end-processing protein yth-1 (317 aa).

The tract at residues 1–20 is disordered; it reads MATTTQTTTNSLPSGAGGPQ. 5 C3H1-type zinc fingers span residues 51–78, 93–120, 121–149, 150–177, and 179–202; these read PADR…HVTA, GFGS…HEYN, LRKM…HIDP, LSRL…HFRR, and LCLY…HPRW. Basic and acidic residues predominate over residues 202-217; sequence WTADKDMEKPRAKGEG. The disordered stretch occupies residues 202 to 317; the sequence is WTADKDMEKP…GRGGFRGKGH (116 aa). Positions 223–237 are enriched in low complexity; it reads QQQQQQQQQQHMGDA. Over residues 253–288 the composition is skewed to basic and acidic residues; sequence YMDRERERDRDNREREMMMQGRDRDGGGHDRHKDRF. Residues 289–301 show a composition bias toward gly residues; sequence GGGGGGGGGGRGR. The span at 302 to 317 shows a compositional bias: basic residues; the sequence is GGWRGRGRGGFRGKGH.

The protein belongs to the CPSF4/YTH1 family.

It localises to the nucleus. In terms of biological role, component of the cleavage factor I (CF I) involved in pre-mRNA 3'-end processing. The sequence is that of mRNA 3'-end-processing protein yth-1 (yth-1) from Neurospora crassa (strain ATCC 24698 / 74-OR23-1A / CBS 708.71 / DSM 1257 / FGSC 987).